The chain runs to 183 residues: Intermembrane phospholipid transport system binding protein MlaD (183 aa).

At M1–E7 the chain is on the cytoplasmic side. Residues I8 to A28 traverse the membrane as a helical; Signal-anchor for type II membrane protein segment. The Periplasmic portion of the chain corresponds to A29–K183. Residues T39 to V116 are MCE/MlaD. A disordered region spans residues K155 to K183. Positions N172 to K183 are enriched in polar residues.

It belongs to the MlaD family. In terms of assembly, the complex is composed of two ATP-binding proteins (MlaF), two transmembrane proteins (MlaE), two cytoplasmic solute-binding proteins (MlaB) and six periplasmic solute-binding proteins (MlaD).

The protein resides in the cell inner membrane. In terms of biological role, part of the ABC transporter complex MlaFEDB, which is involved in a phospholipid transport pathway that maintains lipid asymmetry in the outer membrane by retrograde trafficking of phospholipids from the outer membrane to the inner membrane. MlaD functions in substrate binding with strong affinity for phospholipids and modulates ATP hydrolytic activity of the complex. This chain is Intermembrane phospholipid transport system binding protein MlaD, found in Escherichia coli O157:H7.